A 721-amino-acid polypeptide reads, in one-letter code: Tripartite terminase subunit 1 (721 aa).

The segment at 189-217 (CLKCYEELSLVPNQGKSIRKRLAGKFCNH) adopts a C3H1-type zinc-finger fold. 625–632 (YNDVFGKQ) contributes to the ATP binding site.

Belongs to the herpesviridae TRM1 protein family. In terms of assembly, associates with TRM2 and TRM3 to form the tripartite terminase complex. Interacts with portal protein.

Its subcellular location is the host nucleus. Component of the molecular motor that translocates viral genomic DNA in empty capsid during DNA packaging. Forms a tripartite terminase complex together with TRM2 and TRM3 in the host cytoplasm. Once the complex reaches the host nucleus, it interacts with the capsid portal vertex. This portal forms a ring in which genomic DNA is translocated into the capsid. TRM1 carries an endonuclease activity that plays an important role for the cleavage of concatemeric viral DNA into unit length genomes. The sequence is that of Tripartite terminase subunit 1 from Homo sapiens (Human).